The following is an 850-amino-acid chain: Receptor-like protein kinase ANXUR1 (850 aa).

The first 26 residues, 1 to 26, serve as a signal peptide directing secretion; sequence MSGKTRILFFLTCLSFLLVFPTRSNG. The Extracellular portion of the chain corresponds to 27–429; it reads QDLALSCGTS…KKEFKNEKRH (403 aa). N-linked (GlcNAc...) asparagine glycans are attached at residues N114, N132, N292, N302, and N330. A helical transmembrane segment spans residues 430 to 450; it reads AFIIGSAGGVLAVLIGALCFT. The Cytoplasmic segment spans residues 451–850; the sequence is AYKKKQGYQG…FSQIVNPKGR (400 aa). One can recognise a Protein kinase domain in the interval 517 to 790; that stretch reads FDDSNVIGVG…GDVLWNLEFA (274 aa). Residues 523–531 and K545 contribute to the ATP site; that span reads IGVGGFGKV. D641 (proton acceptor) is an active-site residue. Residues 796–850 are disordered; that stretch reads TADGTRHRTPNNGGSSEDLGRGGMAVNVAGRDDVSDLSSEDNTEIFSQIVNPKGR. The segment covering 839-850 has biased composition (polar residues); the sequence is EIFSQIVNPKGR.

The protein belongs to the protein kinase superfamily. Ser/Thr protein kinase family. In terms of tissue distribution, expressed in pollen, but not in pistils or seedlings.

The protein localises to the cell membrane. The catalysed reaction is L-seryl-[protein] + ATP = O-phospho-L-seryl-[protein] + ADP + H(+). It catalyses the reaction L-threonyl-[protein] + ATP = O-phospho-L-threonyl-[protein] + ADP + H(+). In terms of biological role, receptor-like protein kinase that controls pollen tube behavior by directing rupture at proper timing to release the sperm cell. The protein is Receptor-like protein kinase ANXUR1 (ANX1) of Arabidopsis thaliana (Mouse-ear cress).